A 130-amino-acid polypeptide reads, in one-letter code: Flagellar assembly factor FliW (130 aa).

The protein belongs to the FliW family. Interacts with translational regulator CsrA and flagellin(s).

The protein localises to the cytoplasm. In terms of biological role, acts as an anti-CsrA protein, binds CsrA and prevents it from repressing translation of its target genes, one of which is flagellin. Binds to flagellin and participates in the assembly of the flagellum. This chain is Flagellar assembly factor FliW, found in Clostridioides difficile (strain 630) (Peptoclostridium difficile).